We begin with the raw amino-acid sequence, 448 residues long: Cysteine--tRNA ligase (448 aa).

Zn(2+) is bound at residue Cys-27. The 'HIGH' region motif lies at 29-39 (PTVYNYIHVGN). Cys-210, His-235, and Glu-239 together coordinate Zn(2+). Positions 267–271 (KMSKS) match the 'KMSKS' region motif. Lys-270 provides a ligand contact to ATP.

This sequence belongs to the class-I aminoacyl-tRNA synthetase family. In terms of assembly, monomer. It depends on Zn(2+) as a cofactor.

It is found in the cytoplasm. The enzyme catalyses tRNA(Cys) + L-cysteine + ATP = L-cysteinyl-tRNA(Cys) + AMP + diphosphate. This chain is Cysteine--tRNA ligase, found in Lactococcus lactis subsp. lactis (strain IL1403) (Streptococcus lactis).